Here is a 148-residue protein sequence, read N- to C-terminus: Photosystem I reaction center subunit XI (148 aa).

3 consecutive transmembrane segments (helical) span residues Leu48–Leu68, Ile73–Leu93, and Gly122–Ile142.

The protein belongs to the PsaL family.

Its subcellular location is the plastid. The protein resides in the chloroplast thylakoid membrane. The polypeptide is Photosystem I reaction center subunit XI (Thalassiosira pseudonana (Marine diatom)).